A 293-amino-acid chain; its full sequence is Nucleotide-binding protein BCQ_4976 (293 aa).

14-21 contacts ATP; the sequence is GMSGAGKT. Residue 65–68 participates in GTP binding; it reads DLRG.

Belongs to the RapZ-like family.

Its function is as follows. Displays ATPase and GTPase activities. This is Nucleotide-binding protein BCQ_4976 from Bacillus cereus (strain Q1).